The sequence spans 299 residues: tRNA-cytidine(32) 2-sulfurtransferase (299 aa).

The PP-loop motif motif lies at 56 to 61 (SGGKDS). [4Fe-4S] cluster contacts are provided by Cys-131, Cys-134, and Cys-222.

Belongs to the TtcA family. In terms of assembly, homodimer. Mg(2+) is required as a cofactor. Requires [4Fe-4S] cluster as cofactor.

The protein resides in the cytoplasm. It carries out the reaction cytidine(32) in tRNA + S-sulfanyl-L-cysteinyl-[cysteine desulfurase] + AH2 + ATP = 2-thiocytidine(32) in tRNA + L-cysteinyl-[cysteine desulfurase] + A + AMP + diphosphate + H(+). It functions in the pathway tRNA modification. Functionally, catalyzes the ATP-dependent 2-thiolation of cytidine in position 32 of tRNA, to form 2-thiocytidine (s(2)C32). The sulfur atoms are provided by the cysteine/cysteine desulfurase (IscS) system. This is tRNA-cytidine(32) 2-sulfurtransferase from Xylella fastidiosa (strain M12).